A 342-amino-acid chain; its full sequence is MIIIDGSYGEGGGQILRTSIALSAITGEPVKIINIRANRPNPGLRPQHLNAILALKKLANAKVEGAEVGSREVTFIPGELKGGEIRVDIGTAGSITLVLQALLPAMVFAKDTVEFKITGGTDVSWSPPVDYLINVTMFALRKIGIEGEIKLLRRGHYPKGGGIVAGYVKPWIERKELIAEEFENIYKVSGISHATNLPAHVAERQAKAAMEELKVLGVPIEIKKEVSHSLGPGSGIVVWAETECLRLGGDALGKKGKPAEEVGREAAQELLSQVKTKACVDKFLGDQIIPFLAISGGKIKVAEITKHLITNVWVVEQFFGKVFEVKGGVGEKGEVRVVRKAW.

This sequence belongs to the RNA 3'-terminal cyclase family. Type 1 subfamily.

The protein resides in the cytoplasm. The catalysed reaction is a 3'-end 3'-phospho-ribonucleotide-RNA + GTP = a 3'-end 2',3'-cyclophospho-ribonucleotide-RNA + GMP + diphosphate. Its activity is regulated as follows. Inhibited by GMP. Its function is as follows. Catalyzes the GTP-dependent conversion of 3'-phosphate to a 2',3'-cyclic phosphodiester at the end of RNA. The biological role of this enzyme is unknown but it is likely to function in some aspects of cellular RNA processing. The sequence is that of RNA 3'-terminal phosphate cyclase from Pyrococcus furiosus (strain ATCC 43587 / DSM 3638 / JCM 8422 / Vc1).